Consider the following 2144-residue polypeptide: HEAT repeat-containing protein 1 (2144 aa).

Methionine 1 carries the post-translational modification N-acetylmethionine. N-acetylthreonine; in HEAT repeat-containing protein 1, N-terminally processed is present on threonine 2. Serine 516 carries the post-translational modification Phosphoserine. The stretch at 913–951 (ASISSPVVTSLLINLGSPVKEVRRAAIQCLQALSGVASP) is one HEAT 1 repeat. The interval 1170 to 1191 (KAKPLGTVQQKRRQKMQQKKSQ) is disordered. Serine 1190 carries the post-translational modification Phosphoserine. Residues 1347–1385 (NKTVKMVIPALIQSDSGDSIEVSRNVEEIVVKIISVFVD) form an HEAT 2 repeat. Position 1492 is a phosphoserine (serine 1492). HEAT repeat units follow at residues 1594 to 1632 (LLPT…QNIS), 1730 to 1770 (IPQL…VVET), and 2100 to 2138 (IVLL…VLGE).

This sequence belongs to the HEATR1/UTP10 family. As to quaternary structure, part of the small subunit (SSU) processome, composed of more than 70 proteins and the RNA chaperone small nucleolar RNA (snoRNA) U3. Interacts with MYC; the interaction is required for localization of MYC to the nucleolus.

The protein resides in the nucleus. It localises to the nucleolus. Functionally, ribosome biogenesis factor; required for recruitment of Myc to nucleoli. Involved in nucleolar processing of pre-18S ribosomal RNA. Required for optimal pre-ribosomal RNA transcription by RNA polymerase I. Part of the small subunit (SSU) processome, first precursor of the small eukaryotic ribosomal subunit. During the assembly of the SSU processome in the nucleolus, many ribosome biogenesis factors, an RNA chaperone and ribosomal proteins associate with the nascent pre-rRNA and work in concert to generate RNA folding, modifications, rearrangements and cleavage as well as targeted degradation of pre-ribosomal RNA by the RNA exosome. Involved in neuronal-lineage cell proliferation. In Homo sapiens (Human), this protein is HEAT repeat-containing protein 1.